A 120-amino-acid chain; its full sequence is UPF0344 protein lmo2265 (120 aa).

4 helical membrane-spanning segments follow: residues 3-23 (GYIH…ALLI), 33-53 (MLQM…IMMV), 62-82 (ILAI…EMLL), and 92-112 (GMFL…GFYL).

It belongs to the UPF0344 family.

Its subcellular location is the cell membrane. The chain is UPF0344 protein lmo2265 from Listeria monocytogenes serovar 1/2a (strain ATCC BAA-679 / EGD-e).